The following is a 428-amino-acid chain: Chaperone SurA (428 aa).

The first 13 residues, 1–13 (MLGALLLSGAVHA), serve as a signal peptide directing secretion. PpiC domains lie at 164-265 (SEEF…KLLE) and 276-375 (RDEV…EVLG). The interval 211–230 (TSSSSENALEGGDMGWRKAA) is disordered.

It is found in the periplasm. The enzyme catalyses [protein]-peptidylproline (omega=180) = [protein]-peptidylproline (omega=0). Chaperone involved in the correct folding and assembly of outer membrane proteins. Recognizes specific patterns of aromatic residues and the orientation of their side chains, which are found more frequently in integral outer membrane proteins. May act in both early periplasmic and late outer membrane-associated steps of protein maturation. In Pseudomonas syringae pv. syringae (strain B728a), this protein is Chaperone SurA.